Consider the following 218-residue polypeptide: Adenylate kinase (218 aa).

An ATP-binding site is contributed by 10-15; that stretch reads GAGKGT. The interval 30-59 is NMP; sequence STGDMLRAAVKAGTPLGIAAKKIMDEGGLV. Residues T31, R36, 57–59, 85–88, and Q92 contribute to the AMP site; these read GLV and GFPR. The tract at residues 122-159 is LID; it reads GRRVHPASGRTYHVKFNPPKVAGRDDVTGEELIQRDDD. ATP-binding positions include R123 and 132 to 133; that span reads TY. AMP contacts are provided by R156 and R167. G203 lines the ATP pocket.

It belongs to the adenylate kinase family. In terms of assembly, monomer.

The protein localises to the cytoplasm. The catalysed reaction is AMP + ATP = 2 ADP. It functions in the pathway purine metabolism; AMP biosynthesis via salvage pathway; AMP from ADP: step 1/1. Its function is as follows. Catalyzes the reversible transfer of the terminal phosphate group between ATP and AMP. Plays an important role in cellular energy homeostasis and in adenine nucleotide metabolism. The protein is Adenylate kinase of Herminiimonas arsenicoxydans.